The chain runs to 418 residues: Deubiquitinase and deneddylase Dub1 (418 aa).

The span at 1–10 shows a compositional bias: polar residues; it reads MLSPTNSISK. Positions 1–23 are disordered; that stretch reads MLSPTNSISKTAPVPPQDSSKPV. A helical transmembrane segment spans residues 40–60; that stretch reads TALAVLLVVVTLGLILLFYSF. A disordered region spans residues 72 to 144; that stretch reads TRPSTKEQPT…PLPPKAPKPV (73 aa). Over residues 86–141 the composition is skewed to pro residues; sequence VPLPSPPLAVPRPSTPPPPVISRPSTPPAPTPAISPPSTPSAPKPSTPPPLPPKAP. Active-site residues include H288, D305, and C358.

It belongs to the peptidase C48 family.

The protein resides in the secreted. The protein localises to the host cell. It localises to the membrane. Effector proteins function to alter host cell physiology and promote bacterial survival in host tissues. This protease possesses deubiquitinating and deneddylating activities. This Chlamydia trachomatis serovar B (strain Jali20/OT) protein is Deubiquitinase and deneddylase Dub1 (cdu1).